The primary structure comprises 178 residues: Ribosome maturation factor RimP (178 aa).

This sequence belongs to the RimP family.

It is found in the cytoplasm. In terms of biological role, required for maturation of 30S ribosomal subunits. In Corynebacterium glutamicum (strain ATCC 13032 / DSM 20300 / JCM 1318 / BCRC 11384 / CCUG 27702 / LMG 3730 / NBRC 12168 / NCIMB 10025 / NRRL B-2784 / 534), this protein is Ribosome maturation factor RimP.